The sequence spans 368 residues: BTB/POZ and TAZ domain-containing protein 5 (368 aa).

The disordered stretch occupies residues 1-25 (MENMDDFSPENVLAPPPPPPPMKKS). Residues 55-123 (ADVLIHTDDN…LYSSCYEKQD (69 aa)) form the BTB domain. A TAZ-type zinc finger spans residues 233–324 (QTYTQLYEAM…SEQCKVPLCS (92 aa)). The caM-binding stretch occupies residues 335–358 (RKDEKRWKLLVRNVLSTKRIGGSP).

As to quaternary structure, interacts with CUL3A. Preferentially expressed in young leaves, roots and stems.

It is found in the cytoplasm. The protein operates within protein modification; protein ubiquitination. May act as a substrate-specific adapter of an E3 ubiquitin-protein ligase complex (CUL3-RBX1-BTB) which mediates the ubiquitination and subsequent proteasomal degradation of target proteins. The polypeptide is BTB/POZ and TAZ domain-containing protein 5 (BT5) (Arabidopsis thaliana (Mouse-ear cress)).